We begin with the raw amino-acid sequence, 177 residues long: MTLWVDADSCPARVRVLVARAAARLGCVARFVANRPIPLVQSPHCIMVETQPVDQAADRHIIAYARAGDLVVTRDIVLAKAIVDARISVINDRGDVYTEENIRERLSVRNFMYDLRGQGLAPETTSPFGRRDAARFADSLDRETAKLLRLARRREAKTGEEQCDWPSAQGKSQTGRR.

The segment at 155 to 177 (EAKTGEEQCDWPSAQGKSQTGRR) is disordered.

The protein belongs to the UPF0178 family.

The protein is UPF0178 protein TP_0845 of Treponema pallidum (strain Nichols).